Reading from the N-terminus, the 355-residue chain is Peptide chain release factor 1 (355 aa).

Glutamine 231 bears the N5-methylglutamine mark. Residues 280 to 293 show a composition bias toward basic and acidic residues; sequence KERKAKEQSERKDQ. The segment at 280–307 is disordered; that stretch reads KERKAKEQSERKDQVGTGDRSGRIRTYN.

Belongs to the prokaryotic/mitochondrial release factor family. In terms of processing, methylated by PrmC. Methylation increases the termination efficiency of RF1.

The protein resides in the cytoplasm. In terms of biological role, peptide chain release factor 1 directs the termination of translation in response to the peptide chain termination codons UAG and UAA. The chain is Peptide chain release factor 1 from Campylobacter hominis (strain ATCC BAA-381 / DSM 21671 / CCUG 45161 / LMG 19568 / NCTC 13146 / CH001A).